Reading from the N-terminus, the 249-residue chain is Electron transfer flavoprotein subunit beta (249 aa).

Belongs to the ETF beta-subunit/FixA family. As to quaternary structure, heterodimer of an alpha and a beta subunit. FAD is required as a cofactor. Requires AMP as cofactor.

Its function is as follows. The electron transfer flavoprotein serves as a specific electron acceptor for other dehydrogenases. It transfers the electrons to the main respiratory chain via ETF-ubiquinone oxidoreductase (ETF dehydrogenase). The polypeptide is Electron transfer flavoprotein subunit beta (etfB) (Bradyrhizobium diazoefficiens (strain JCM 10833 / BCRC 13528 / IAM 13628 / NBRC 14792 / USDA 110)).